Reading from the N-terminus, the 314-residue chain is uncharacterized protein (314 aa).

Residues 1-70 form a disordered region; the sequence is MAGNSQRRGA…QGRHKKTDDT (70 aa). The segment covering 44 to 65 has biased composition (basic residues); it reads RPHHPAGKRAAKAARQAQGRHK. Residues Gly265, Ile285, and Leu294 each coordinate S-adenosyl-L-methionine.

The protein belongs to the class IV-like SAM-binding methyltransferase superfamily. RNA methyltransferase TrmH family.

This is an uncharacterized protein from Mycolicibacterium gilvum (strain PYR-GCK) (Mycobacterium gilvum (strain PYR-GCK)).